The primary structure comprises 283 residues: ATP phosphoribosyltransferase (283 aa).

It belongs to the ATP phosphoribosyltransferase family. Long subfamily. In terms of assembly, equilibrium between an active dimeric form, an inactive hexameric form and higher aggregates. Interconversion between the various forms is largely reversible and is influenced by the natural substrates and inhibitors of the enzyme. It depends on Mg(2+) as a cofactor.

Its subcellular location is the cytoplasm. It catalyses the reaction 1-(5-phospho-beta-D-ribosyl)-ATP + diphosphate = 5-phospho-alpha-D-ribose 1-diphosphate + ATP. Its pathway is amino-acid biosynthesis; L-histidine biosynthesis; L-histidine from 5-phospho-alpha-D-ribose 1-diphosphate: step 1/9. Feedback inhibited by histidine. Functionally, catalyzes the condensation of ATP and 5-phosphoribose 1-diphosphate to form N'-(5'-phosphoribosyl)-ATP (PR-ATP). Has a crucial role in the pathway because the rate of histidine biosynthesis seems to be controlled primarily by regulation of HisG enzymatic activity. The protein is ATP phosphoribosyltransferase of Mycobacterium sp. (strain KMS).